We begin with the raw amino-acid sequence, 385 residues long: Ribosomal RNA large subunit methyltransferase G (385 aa).

It belongs to the methyltransferase superfamily. RlmG family.

The protein resides in the cytoplasm. It catalyses the reaction guanosine(1835) in 23S rRNA + S-adenosyl-L-methionine = N(2)-methylguanosine(1835) in 23S rRNA + S-adenosyl-L-homocysteine + H(+). Its function is as follows. Specifically methylates the guanine in position 1835 (m2G1835) of 23S rRNA. The sequence is that of Ribosomal RNA large subunit methyltransferase G from Vibrio campbellii (strain ATCC BAA-1116).